The sequence spans 78 residues: UPF0335 protein RP113 (78 aa).

The protein belongs to the UPF0335 family.

The polypeptide is UPF0335 protein RP113 (Rickettsia prowazekii (strain Madrid E)).